Reading from the N-terminus, the 638-residue chain is Probable lysine-specific demethylase 4F (638 aa).

The 43-residue stretch at 15–57 (IMTFYPTMEEFADFNTYVAYMESQGAHRAGLAKVIPPKEWKAR) folds into the JmjN domain. Tyr-133 is a binding site for 2-oxoglutarate. The JmjC domain maps to 143-309 (EESTKQWNLG…YGKVASQCSC (167 aa)). 2 residues coordinate Fe cation: His-189 and Glu-191. 2-oxoglutarate is bound by residues Asn-199 and Lys-207. The Zn(2+) site is built by Cys-235 and His-241. Lys-242 is a 2-oxoglutarate binding site. Residue His-277 coordinates Fe cation. The Zn(2+) site is built by Cys-307 and Cys-309. The interval 426-474 (PCRGCGRGRGRGRGRGRRPRELGTEETTVQSAAKRRLSVGTGSRAPGRK) is disordered. Residues 431–443 (GRGRGRGRGRGRR) are compositionally biased toward basic residues.

It belongs to the JHDM3 histone demethylase family. Fe(2+) is required as a cofactor.

The protein localises to the nucleus. It catalyses the reaction N(6),N(6),N(6)-trimethyl-L-lysyl(9)-[histone H3] + 2 2-oxoglutarate + 2 O2 = N(6)-methyl-L-lysyl(9)-[histone H3] + 2 formaldehyde + 2 succinate + 2 CO2. Probable histone demethylase that specifically demethylates 'Lys-9' of histone H3, thereby playing a central role in histone code. This is Probable lysine-specific demethylase 4F from Homo sapiens (Human).